A 584-amino-acid chain; its full sequence is UBX domain-containing protein 2 (584 aa).

The Cytoplasmic portion of the chain corresponds to 1-80; it reads MPVVNHEDSE…PTQTSTPMAE (80 aa). The chain crosses the membrane as a helical span at residues 81–101; that stretch reads TLVPPALGPRPLLFTASLPVV. Topologically, residues 102–151 are lumenal; it reads RPLPANFRNDFRTIGLNGRSNTVWSMFESFSYDGNPFLFILLLIPRIINR. Residues 152 to 172 traverse the membrane as a helical segment; sequence LSATIFTFFCTLLSLHSISGG. The Cytoplasmic segment spans residues 173-584; sequence GNSGKPKISK…DEEDEENEEQ (412 aa). The UBX domain maps to 426–570; the sequence is ETTGKQATLQ…WPNGSLLVEA (145 aa).

As to quaternary structure, component of the DOA10 ubiquitin ligase complex which contains E3 ligase SSM4/DOA10 and CDC48-binding protein UBX2/SEL1. Component of the HRD1 ubiquitin ligase complex which contains the E3 ligase HRD1, its cofactors HRD3, USA1 and DER1, substrate recruiting factor YOS9 and UBX2. In ERAD-L, HRD3 and YOS9 jointly bind misfolded glycoproteins in the endoplasmic reticulum (ER) lumen. Movement of ERAD-L substrates through the ER membrane is facilitated by HRD1 and DER1 which have lateral gates facing each other and which distort the membrane region between the lateral gates, making it much thinner than a normal phospholipid bilayer. Substrates insert into the membrane as a hairpin loop with one strand interacting with DER1 and the other with HRD1. Both the DOA10 and HRD1 ubiquitin ligase complexes interact with the heterotrimeric CDC48-NPL4-UFD1 ATPase complex which is recruited by UBX2 via its interaction with CDC48 and which moves ubiquitinated substrates to the cytosol for targeting to the proteasome.

It localises to the endoplasmic reticulum membrane. In terms of biological role, integral endoplasmic reticulum membrane protein that coordinates the assembly of the ER-associated protein degradation (ERAD) machinery at the ER membrane. Mediates binding of CDC48 to the E3 ubiquitin ligases SSM4/DOA10 and HRD1, and to ERAD substrates. Component of the DOA10 ubiquitin ligase complex, which is part of the ERAD-C pathway responsible for the rapid degradation of membrane proteins with misfolded cytoplasmic domains. ERAD-C substrates are ubiquitinated through DOA10 in conjunction with the E2 ubiquitin-conjugating enzymes UBC6 and UBC7-CUE1. Also a component of the HRD1 ubiquitin ligase complex, which is part of the ERAD-L and ERAD-M pathways responsible for the rapid degradation of soluble lumenal and membrane proteins with misfolded lumenal domains (ERAD-L), or ER-membrane proteins with misfolded transmembrane domains (ERAD-M). ERAD-L substrates are ubiquitinated through HRD1 in conjunction with the E2 ubiquitin-conjugating enzymes UBC1 and UBC7-CUE1. Ubiquitinated substrates are then removed to the cytosol via the action of the CDC48-NPL4-UFD1 ATPase complex and targeted to the proteasome. The chain is UBX domain-containing protein 2 (UBX2) from Saccharomyces cerevisiae (strain ATCC 204508 / S288c) (Baker's yeast).